The following is a 311-amino-acid chain: GTPase Era (311 aa).

The Era-type G domain maps to 18-185; that stretch reads RSGFVALIGA…AKYLAESVPN (168 aa). A G1 region spans residues 26 to 33; that stretch reads GAPNAGKS. 26–33 lines the GTP pocket; sequence GAPNAGKS. A G2 region spans residues 52-56; the sequence is QTTRA. Residues 73 to 76 form a G3 region; the sequence is DTPG. GTP-binding positions include 73–77 and 135–138; these read DTPGI and NKVD. The tract at residues 135 to 138 is G4; it reads NKVD. The segment at 164–166 is G5; sequence ISA. The KH type-2 domain maps to 216–293; that stretch reads LHEELPYAST…HLFLFVKVRE (78 aa).

This sequence belongs to the TRAFAC class TrmE-Era-EngA-EngB-Septin-like GTPase superfamily. Era GTPase family. Monomer.

The protein localises to the cytoplasm. It is found in the cell inner membrane. Its function is as follows. An essential GTPase that binds both GDP and GTP, with rapid nucleotide exchange. Plays a role in 16S rRNA processing and 30S ribosomal subunit biogenesis and possibly also in cell cycle regulation and energy metabolism. This chain is GTPase Era, found in Brucella suis biovar 1 (strain 1330).